A 116-amino-acid polypeptide reads, in one-letter code: Ribonuclease P protein component (116 aa).

It belongs to the RnpA family. As to quaternary structure, consists of a catalytic RNA component (M1 or rnpB) and a protein subunit.

It carries out the reaction Endonucleolytic cleavage of RNA, removing 5'-extranucleotides from tRNA precursor.. Functionally, RNaseP catalyzes the removal of the 5'-leader sequence from pre-tRNA to produce the mature 5'-terminus. It can also cleave other RNA substrates such as 4.5S RNA. The protein component plays an auxiliary but essential role in vivo by binding to the 5'-leader sequence and broadening the substrate specificity of the ribozyme. The polypeptide is Ribonuclease P protein component (Thermoanaerobacter pseudethanolicus (strain ATCC 33223 / 39E) (Clostridium thermohydrosulfuricum)).